The chain runs to 1235 residues: High-affinity potassium transport protein (1235 aa).

Ser-15 carries the post-translational modification Phosphoserine. 2 helical membrane passes run Ser-49 to Tyr-70 and Ile-78 to Ile-98. Asn-100 carries an N-linked (GlcNAc...) asparagine glycan. The helical transmembrane segment at Ile-107–Phe-127 threads the bilayer. Disordered stretches follow at residues Leu-161–Asp-310, Glu-323–Tyr-344, Lys-361–Pro-441, and Arg-488–Gln-565. The segment covering Arg-164–Pro-179 has biased composition (polar residues). N-linked (GlcNAc...) asparagine glycosylation occurs at Asn-169. A compositionally biased stretch (basic and acidic residues) spans Val-198–Arg-217. The span at Ser-219–Ser-232 shows a compositional bias: low complexity. Asn-222 and Asn-227 each carry an N-linked (GlcNAc...) asparagine glycan. Over residues Val-237–Glu-247 the composition is skewed to acidic residues. Positions Tyr-248–Lys-274 are enriched in polar residues. Asn-251 carries an N-linked (GlcNAc...) asparagine glycan. N-linked (GlcNAc...) asparagine glycans are attached at residues Asn-369 and Asn-383. 2 stretches are compositionally biased toward polar residues: residues Glu-370–Gly-415 and Ser-490–Val-502. Ser-414 bears the Phosphoserine mark. 3 N-linked (GlcNAc...) asparagine glycosylation sites follow: Asn-497, Asn-501, and Asn-532. Residues Asp-510 to Glu-539 are compositionally biased toward acidic residues. The residue at position 534 (Ser-534) is a Phosphoserine. Residues Arg-540–Gln-563 are compositionally biased toward basic and acidic residues. N-linked (GlcNAc...) asparagine glycans are attached at residues Asn-580 and Asn-677. Residues His-671–Pro-706 are disordered. Over residues Glu-680 to Pro-706 the composition is skewed to polar residues. 5 helical membrane-spanning segments follow: residues Ile-778–Leu-800, Val-813–Leu-834, Ser-838–Ile-858, Gly-862–Ser-882, and Cys-898–Leu-918. An N-linked (GlcNAc...) asparagine glycan is attached at Asn-919. 2 consecutive transmembrane segments (helical) span residues Trp-923 to Tyr-943 and Ser-971 to Ile-991. Positions Gly-1003 to Asn-1063 are disordered. Over residues Gly-1010–Glu-1031 the composition is skewed to acidic residues. A glycan (N-linked (GlcNAc...) asparagine) is linked at Asn-1030. A compositionally biased stretch (low complexity) spans Gln-1036 to Asn-1049. The next 2 membrane-spanning stretches (helical) occupy residues Gln-1078–Gly-1098 and Ile-1111–Tyr-1131. N-linked (GlcNAc...) asparagine glycosylation is present at Asn-1135.

This sequence belongs to the TrkH potassium transport family.

The protein resides in the membrane. Functionally, this protein is required for high-affinity potassium transport. The protein is High-affinity potassium transport protein (TRK1) of Saccharomyces cerevisiae (strain ATCC 204508 / S288c) (Baker's yeast).